Consider the following 182-residue polypeptide: T-cell surface glycoprotein CD3 gamma chain (182 aa).

Residues 1–22 (MEQGKGLAVLILAIILLQGTLA) form the signal peptide. Topologically, residues 23–116 (QSIKGNHLVK…CIELNAATIS (94 aa)) are extracellular. One can recognise an Ig-like domain in the interval 37-94 (QEDGSVLLTCDAEAKNITWFKDGKMIGFLTEDKKKWNLGSNAKDPRGMYQCKGSQNKS). Residues cysteine 46 and cysteine 87 are joined by a disulfide bond. 2 N-linked (GlcNAc...) asparagine glycosylation sites follow: asparagine 52 and asparagine 92. A helical membrane pass occupies residues 117 to 137 (GFLFAEIVSIFVLAVGVYFIA). The Cytoplasmic segment spans residues 138–182 (GQDGVRQSRASDKQTLLPNDQLYQPLKDREDDQYSHLQGNQLRRN). Position 145 is a phosphoserine (serine 145). Serine 148 bears the Phosphoserine; by PKC mark. One can recognise an ITAM domain in the interval 149–177 (DKQTLLPNDQLYQPLKDREDDQYSHLQGN). The Di-leucine motif motif lies at 153-154 (LL).

In terms of assembly, the TCR-CD3 complex is composed of a CD3D/CD3E and a CD3G/CD3E heterodimers that preferentially associate with TCRalpha and TCRbeta, respectively, to form TCRalpha/CD3E/CD3G and TCRbeta/CD3G/CD3E trimers. In turn, the hexamer interacts with CD3Z homodimer to form the TCR-CD3 complex. Alternatively, TCRalpha and TCRbeta can be replaced by TCRgamma and TCRdelta. Post-translationally, phosphorylated on Tyr residues after T-cell receptor triggering by LCK in association with CD4/CD8. Phosphorylated also by PKC; leading to the TCR complex down-regulation. Phosphorylated on Tyr residues after T-cell receptor triggering by LCK in association with CD4/CD8.

It localises to the cell membrane. Its function is as follows. Part of the TCR-CD3 complex present on T-lymphocyte cell surface that plays an essential role in adaptive immune response. When antigen presenting cells (APCs) activate T-cell receptor (TCR), TCR-mediated signals are transmitted across the cell membrane by the CD3 chains CD3D, CD3E, CD3G and CD3Z. All CD3 chains contain immunoreceptor tyrosine-based activation motifs (ITAMs) in their cytoplasmic domain. Upon TCR engagement, these motifs become phosphorylated by Src family protein tyrosine kinases LCK and FYN, resulting in the activation of downstream signaling pathways. In addition to this role of signal transduction in T-cell activation, CD3G plays an essential role in the dynamic regulation of TCR expression at the cell surface. Indeed, constitutive TCR cycling is dependent on the di-leucine-based (diL) receptor-sorting motif present in CD3G. The polypeptide is T-cell surface glycoprotein CD3 gamma chain (CD3G) (Homo sapiens (Human)).